Reading from the N-terminus, the 87-residue chain is Small ribosomal subunit protein bS20 (87 aa).

The tract at residues 1 to 27 is disordered; it reads MANIKSAKKRAIQSEKRRQHNASRRSM.

The protein belongs to the bacterial ribosomal protein bS20 family.

In terms of biological role, binds directly to 16S ribosomal RNA. The polypeptide is Small ribosomal subunit protein bS20 (Aeromonas salmonicida (strain A449)).